The chain runs to 281 residues: ATP synthase subunit a (281 aa).

Helical transmembrane passes span K56–F76, L117–A137, I144–F164, K181–I201, F215–V235, I237–I257, and A259–E279.

It belongs to the ATPase A chain family. In terms of assembly, F-type ATPases have 2 components, CF(1) - the catalytic core - and CF(0) - the membrane proton channel. CF(1) has five subunits: alpha(3), beta(3), gamma(1), delta(1), epsilon(1). CF(0) has three main subunits: a(1), b(2) and c(9-12). The alpha and beta chains form an alternating ring which encloses part of the gamma chain. CF(1) is attached to CF(0) by a central stalk formed by the gamma and epsilon chains, while a peripheral stalk is formed by the delta and b chains.

It localises to the cell membrane. Its function is as follows. Key component of the proton channel; it plays a direct role in the translocation of protons across the membrane. This is ATP synthase subunit a from Streptomyces lividans.